Here is a 428-residue protein sequence, read N- to C-terminus: Tubby-like F-box protein 5 (428 aa).

The segment at 17-65 (IGSMSRRAADGRAGGGRGGSRHSWPVLWSEQQQPPQQQQLQRQEHQQQQ) is disordered. Over residues 47 to 65 (QQQPPQQQQLQRQEHQQQQ) the composition is skewed to low complexity. The F-box domain maps to 65–117 (QGRWANLPPELLLDVIQRVEASEATWPARRQVVACAAVCRSWREVTKEVVKTL).

The protein belongs to the TUB family. As to expression, ubiquitous.

This chain is Tubby-like F-box protein 5 (TULP5), found in Oryza sativa subsp. japonica (Rice).